Reading from the N-terminus, the 264-residue chain is Zinc import ATP-binding protein ZnuC (264 aa).

The region spanning 11–226 (IELQNIKVVF…PTFIHLFGDQ (216 aa)) is the ABC transporter domain. 43-50 (GPNGGGKS) contacts ATP.

It belongs to the ABC transporter superfamily. Zinc importer (TC 3.A.1.15.5) family. The complex is composed of two ATP-binding proteins (ZnuC), two transmembrane proteins (ZnuB) and a solute-binding protein (ZnuA).

It is found in the cell inner membrane. The catalysed reaction is Zn(2+)(out) + ATP(in) + H2O(in) = Zn(2+)(in) + ADP(in) + phosphate(in) + H(+)(in). Part of the ABC transporter complex ZnuABC involved in zinc import. Responsible for energy coupling to the transport system. The sequence is that of Zinc import ATP-binding protein ZnuC from Mannheimia succiniciproducens (strain KCTC 0769BP / MBEL55E).